The primary structure comprises 349 residues: Aspartate carbamoyltransferase catalytic subunit (349 aa).

Residues Arg59 and Thr60 each contribute to the carbamoyl phosphate site. Lys87 contributes to the L-aspartate binding site. Carbamoyl phosphate-binding residues include Arg109, His142, and Gln145. Residues Arg182 and Arg253 each contribute to the L-aspartate site. Positions 294 and 295 each coordinate carbamoyl phosphate.

The protein belongs to the aspartate/ornithine carbamoyltransferase superfamily. ATCase family. Heterododecamer (2C3:3R2) of six catalytic PyrB chains organized as two trimers (C3), and six regulatory PyrI chains organized as three dimers (R2).

The catalysed reaction is carbamoyl phosphate + L-aspartate = N-carbamoyl-L-aspartate + phosphate + H(+). Its pathway is pyrimidine metabolism; UMP biosynthesis via de novo pathway; (S)-dihydroorotate from bicarbonate: step 2/3. Catalyzes the condensation of carbamoyl phosphate and aspartate to form carbamoyl aspartate and inorganic phosphate, the committed step in the de novo pyrimidine nucleotide biosynthesis pathway. This is Aspartate carbamoyltransferase catalytic subunit from Synechococcus sp. (strain CC9605).